The chain runs to 469 residues: Cytosolic beta-glucosidase (469 aa).

Positions 17, 120, and 164 each coordinate substrate. Residue glutamate 165 is the Proton donor of the active site. Residue tyrosine 309 participates in substrate binding. Catalysis depends on glutamate 373, which acts as the Nucleophile. Substrate is bound by residues tryptophan 417 and 424–425 (EW).

Belongs to the glycosyl hydrolase 1 family. Klotho subfamily. In terms of assembly, may interact with NEU2. The N-terminus is blocked. In terms of tissue distribution, present in small intestine (at protein level). Expressed in liver, small intestine, colon, spleen and kidney. Down-regulated in renal cell carcinomas and hepatocellular carcinomas.

It is found in the cytoplasm. Its subcellular location is the cytosol. It catalyses the reaction Hydrolysis of terminal, non-reducing beta-D-glucosyl residues with release of beta-D-glucose.. The enzyme catalyses a beta-D-glucosyl-(1&lt;-&gt;1')-N-acylsphing-4-enine + H2O = an N-acylsphing-4-enine + D-glucose. It carries out the reaction a beta-D-galactosyl-(1&lt;-&gt;1')-N-acylsphing-4-enine + H2O = an N-acylsphing-4-enine + D-galactose. The catalysed reaction is beta-D-glucosyl-(1&lt;-&gt;1)-sphing-4-enine + H2O = sphing-4-enine + D-glucose. It catalyses the reaction beta-D-glucosyl-(1&lt;-&gt;1)-N-octadecanoylsphing-4-enine + H2O = N-octadecanoylsphing-4-enine + D-glucose. The enzyme catalyses beta-D-galactosyl-(1&lt;-&gt;1)-sphing-4-enine + H2O = sphing-4-enine + D-galactose. It carries out the reaction beta-D-galactosyl-(1&lt;-&gt;1')-N-octadecanoylsphing-4-enine + H2O = N-octadecanoylsphing-4-enine + D-galactose. The catalysed reaction is a beta-D-xylosyl-(1&lt;-&gt;1')-N-acylsphing-4-enine + cholesterol = cholesteryl 3-beta-D-xyloside + an N-acylsphing-4-enine. With respect to regulation, inhibited by 2,4-dinitrophenyl-2-fluoro-2-deoxy-beta-D-glucopyranoside. Inhibited by sodium taurocholate. Inhibited by alpha-1-C-nonyl-DIX/AnDIX. The glucosylceramidase activity is slightly inhibited by conduritol B epoxide/CBE while the galactosylceramidase activity is not. Functionally, neutral cytosolic beta-glycosidase with a broad substrate specificity that could play a role in the catabolism of glycosylceramides. Has a significant glucosylceramidase activity in vitro. However, that activity is relatively low and its significance in vivo is not clear. Hydrolyzes galactosylceramides/GalCers, glucosylsphingosines/GlcSphs and galactosylsphingosines/GalSphs. However, the in vivo relevance of these activities is unclear. It can also hydrolyze a broad variety of dietary glycosides including phytoestrogens, flavonols, flavones, flavanones and cyanogens in vitro and could therefore play a role in the metabolism of xenobiotics. Possesses transxylosylase activity in vitro using xylosylated ceramides/XylCers (such as beta-D-xylosyl-(1&lt;-&gt;1')-N-acylsphing-4-enine) as xylosyl donors and cholesterol as acceptor. Could also play a role in the catabolism of cytosolic sialyl free N-glycans. The polypeptide is Cytosolic beta-glucosidase (Homo sapiens (Human)).